We begin with the raw amino-acid sequence, 1273 residues long: DNA-directed RNA polymerase subunit beta (1273 aa).

Belongs to the RNA polymerase beta chain family. As to quaternary structure, the RNAP catalytic core consists of 2 alpha, 1 beta, 1 beta' and 1 omega subunit. When a sigma factor is associated with the core the holoenzyme is formed, which can initiate transcription.

It carries out the reaction RNA(n) + a ribonucleoside 5'-triphosphate = RNA(n+1) + diphosphate. In terms of biological role, DNA-dependent RNA polymerase catalyzes the transcription of DNA into RNA using the four ribonucleoside triphosphates as substrates. The polypeptide is DNA-directed RNA polymerase subunit beta (Phytoplasma mali (strain AT)).